We begin with the raw amino-acid sequence, 338 residues long: tRNA methyltransferase 10 homolog A (338 aa).

2 disordered regions span residues 1 to 91 (MSSE…DRKR) and 296 to 338 (RVEG…SVPH). Position 22 is a phosphoserine (Ser-22). Residues 52 to 80 (KQWEEQRELRKQKRKEKRKRKQLERQCQP) are a coiled coil. Basic residues predominate over residues 61–73 (RKQKRKEKRKRKQ). In terms of domain architecture, SAM-dependent MTase TRM10-type spans 88 to 279 (DRKRIRRDVV…TILPQRKGAV (192 aa)). Residues 308–328 (EENRHELDSTHEEEKQDKENS) show a composition bias toward basic and acidic residues. The span at 329–338 (TESTVNSVPH) shows a compositional bias: polar residues. Ser-335 is subject to Phosphoserine.

This sequence belongs to the class IV-like SAM-binding methyltransferase superfamily. TRM10 family. In terms of assembly, interacts with tRNA.

It localises to the nucleus. The protein resides in the nucleolus. It catalyses the reaction guanosine(9) in tRNA + S-adenosyl-L-methionine = N(1)-methylguanosine(9) in tRNA + S-adenosyl-L-homocysteine + H(+). Functionally, S-adenosyl-L-methionine-dependent guanine N(1)-methyltransferase that catalyzes the formation of N(1)-methylguanine at position 9 (m1G9) in tRNAs. Probably not able to catalyze formation of N(1)-methyladenine at position 9 (m1A9) in tRNAs. The protein is tRNA methyltransferase 10 homolog A (TRMT10A) of Bos taurus (Bovine).